Reading from the N-terminus, the 123-residue chain is uncharacterized protein (123 aa).

This is an uncharacterized protein from Methanocaldococcus jannaschii (strain ATCC 43067 / DSM 2661 / JAL-1 / JCM 10045 / NBRC 100440) (Methanococcus jannaschii).